Here is a 178-residue protein sequence, read N- to C-terminus: uncharacterized protein (178 aa).

In terms of biological role, this protein is non-essential for virus function. This is an uncharacterized protein from Sulfolobus spindle-shape virus 1 (SSV1).